The primary structure comprises 401 residues: Argininosuccinate synthase (401 aa).

ATP is bound at residue 8 to 16 (AYSGGLDTS). Residue Tyr-87 participates in L-citrulline binding. Gly-117 serves as a coordination point for ATP. Positions 119, 123, and 124 each coordinate L-aspartate. Position 123 (Asn-123) interacts with L-citrulline. Residues Arg-127, Ser-175, Glu-259, and Tyr-271 each coordinate L-citrulline.

Belongs to the argininosuccinate synthase family. Type 1 subfamily. Homotetramer.

The protein resides in the cytoplasm. The enzyme catalyses L-citrulline + L-aspartate + ATP = 2-(N(omega)-L-arginino)succinate + AMP + diphosphate + H(+). Its pathway is amino-acid biosynthesis; L-arginine biosynthesis; L-arginine from L-ornithine and carbamoyl phosphate: step 2/3. The polypeptide is Argininosuccinate synthase (Arthrobacter sp. (strain FB24)).